Reading from the N-terminus, the 247-residue chain is MHTQVLFEHPLNEKMRTWLRIEFLIQQLSINLPIADHAGALHFFRNISDLLDVFERGEVRTELLKELERQQRKLQAWVEVPGVDQDRIEALRQQLKSAGSVLISAPRIGQQLREDRLIALVRQRLSIPGGCCSFDLPTLHIWLHLQQAQRDAQIETWLASLNPLTQALTLVLDLIRNSAPFRKQTSLNGFYQDNGDDADLLRLMLTLDSQLYPQISGHKSRFAIRFMPLDSENGLVPERLDFELACC.

This sequence belongs to the ZapD family. In terms of assembly, interacts with FtsZ.

The protein resides in the cytoplasm. Cell division factor that enhances FtsZ-ring assembly. Directly interacts with FtsZ and promotes bundling of FtsZ protofilaments, with a reduction in FtsZ GTPase activity. The protein is Cell division protein ZapD of Salmonella choleraesuis (strain SC-B67).